Consider the following 557-residue polypeptide: Membrane protein insertase YidC (557 aa).

5 helical membrane-spanning segments follow: residues 6–26 (TILW…WQVH), 219–239 (IGPF…IYTD), 367–387 (IVGN…LAFF), 437–457 (LGGC…YWVL), and 514–534 (MPIV…LYWV).

This sequence belongs to the OXA1/ALB3/YidC family. Type 1 subfamily. In terms of assembly, interacts with the Sec translocase complex via SecD. Specifically interacts with transmembrane segments of nascent integral membrane proteins during membrane integration.

Its subcellular location is the cell inner membrane. Its function is as follows. Required for the insertion and/or proper folding and/or complex formation of integral membrane proteins into the membrane. Involved in integration of membrane proteins that insert both dependently and independently of the Sec translocase complex, as well as at least some lipoproteins. Aids folding of multispanning membrane proteins. The chain is Membrane protein insertase YidC from Polynucleobacter asymbioticus (strain DSM 18221 / CIP 109841 / QLW-P1DMWA-1) (Polynucleobacter necessarius subsp. asymbioticus).